Consider the following 192-residue polypeptide: Probable metallophosphoesterase MJ0623 (192 aa).

A divalent metal cation is bound by residues Asp41, His43, Asp70, Asn92, His115, His144, and His146.

It belongs to the metallophosphoesterase superfamily. YfcE family. A divalent metal cation is required as a cofactor.

The polypeptide is Probable metallophosphoesterase MJ0623 (Methanocaldococcus jannaschii (strain ATCC 43067 / DSM 2661 / JAL-1 / JCM 10045 / NBRC 100440) (Methanococcus jannaschii)).